The sequence spans 63 residues: Large ribosomal subunit protein bL32 (63 aa).

The disordered stretch occupies residues 1–23 (MATPKAKVSKSRRDKRRAQFTAR). The span at 7–18 (KVSKSRRDKRRA) shows a compositional bias: basic residues.

Belongs to the bacterial ribosomal protein bL32 family.

The protein is Large ribosomal subunit protein bL32 of Prosthecochloris aestuarii (strain DSM 271 / SK 413).